The following is a 241-amino-acid chain: Deoxynucleotide monophosphate kinase (241 aa).

Lysine 10 contacts dGMP. The ATP site is built by arginine 11, glycine 13, aspartate 15, and threonine 16. DGMP is bound by residues isoleucine 36 and lysine 37. Residue tyrosine 42 participates in Mg(2+) binding. Arginine 68 is a dGMP binding site. Glutamine 85 and glutamate 108 together coordinate Mg(2+). Residues arginine 132, glycine 139, threonine 140, valine 144, tryptophan 152, aspartate 175, arginine 177, glutamine 178, glutamate 181, and threonine 208 each coordinate dGMP.

This sequence belongs to the dNMP kinase family. Homodimer. Mg(2+) serves as cofactor.

The catalysed reaction is dTMP + ATP = dTDP + ADP. It catalyses the reaction dGMP + ATP = dGDP + ADP. It carries out the reaction 5-hydroxymethyl-dCMP + ATP = 5-hydroxymethyl-dCDP + ADP. Its activity is regulated as follows. Inhibited by pyridoxal 5'-phosphate and diethylpyrocarbonate. Allows the synthesis of deoxyribonucleoside triphosphates necessary for the rapid viral DNA replication. Phosphorylates dGMP, dTMP and 5-hydroxymethyl-dCMP (hmdCMP) while excluding dCMP and dAMP. The phosphorylation of 5-hydroxymethyl-dCMP represents the first step in the replacement of cytosine by hydroxymethylcytosine in new viral DNA genomes. The sequence is that of Deoxynucleotide monophosphate kinase (1) from Enterobacteria phage T4 (Bacteriophage T4).